We begin with the raw amino-acid sequence, 170 residues long: Adenine phosphoribosyltransferase (170 aa).

This sequence belongs to the purine/pyrimidine phosphoribosyltransferase family. Homodimer.

It localises to the cytoplasm. It catalyses the reaction AMP + diphosphate = 5-phospho-alpha-D-ribose 1-diphosphate + adenine. Its pathway is purine metabolism; AMP biosynthesis via salvage pathway; AMP from adenine: step 1/1. Its function is as follows. Catalyzes a salvage reaction resulting in the formation of AMP, that is energically less costly than de novo synthesis. The chain is Adenine phosphoribosyltransferase from Streptococcus pneumoniae (strain Hungary19A-6).